A 302-amino-acid polypeptide reads, in one-letter code: Gap junction delta-2 protein (302 aa).

The Cytoplasmic segment spans residues 1–19 (MGEWTILERLLEAAVQQHS). A helical transmembrane segment spans residues 20–42 (TMIGRILLTVVVIFRILVVAIVG). Residues 43–75 (ETVYDDEQTMFVCNTLQPGCNQACYDKAFPISH) are Extracellular-facing. The helical transmembrane segment at 76–98 (IRYWVFQIIMVCTPSLCFITYSV) threads the bilayer. The Cytoplasmic segment spans residues 99-177 (HQSSKQRERQ…KIRRQEGISR (79 aa)). The helical transmembrane segment at 178 to 200 (FYIIQVVFRNALEIGFLMGQYFL) threads the bilayer. At 201–232 (YGFKVPSMYECNRYPCVKMVECYVSRPTEKTV) the chain is on the extracellular side. A helical transmembrane segment spans residues 233-255 (FLVFMFAVSGLCVILNLAELNHL). The Cytoplasmic portion of the chain corresponds to 256–302 (GWRKIKTAVRGAQERRKSIYEIRNKDSPHRIGVPNFGRTQSSDSAYV).

The protein belongs to the connexin family. Delta-type subfamily. As to quaternary structure, a connexon is composed of a hexamer of connexins. As to expression, retinal specific.

The protein localises to the cell membrane. It localises to the cell junction. Its subcellular location is the gap junction. Its function is as follows. One gap junction consists of a cluster of closely packed pairs of transmembrane channels, the connexons, through which materials of low MW diffuse from one cell to a neighboring cell. This Leucoraja erinaceus (Little skate) protein is Gap junction delta-2 protein.